The following is a 71-amino-acid chain: uncharacterized protein (71 aa).

Positions 20–32 (SSGRRQLTATQPR) are enriched in polar residues. Residues 20–46 (SSGRRQLTATQPRSDPESQRGRTSSNR) are disordered.

This is an uncharacterized protein from Rhizobium leguminosarum.